Here is a 333-residue protein sequence, read N- to C-terminus: tRNA N6-adenosine threonylcarbamoyltransferase (333 aa).

Residues H111 and H115 each contribute to the Fe cation site. Residues L134 to G138, D167, G180, and N272 each bind substrate. Position 300 (D300) interacts with Fe cation.

Belongs to the KAE1 / TsaD family. Requires Fe(2+) as cofactor.

Its subcellular location is the cytoplasm. It carries out the reaction L-threonylcarbamoyladenylate + adenosine(37) in tRNA = N(6)-L-threonylcarbamoyladenosine(37) in tRNA + AMP + H(+). Required for the formation of a threonylcarbamoyl group on adenosine at position 37 (t(6)A37) in tRNAs that read codons beginning with adenine. Is involved in the transfer of the threonylcarbamoyl moiety of threonylcarbamoyl-AMP (TC-AMP) to the N6 group of A37, together with TsaE and TsaB. TsaD likely plays a direct catalytic role in this reaction. The chain is tRNA N6-adenosine threonylcarbamoyltransferase from Legionella pneumophila (strain Paris).